A 526-amino-acid chain; its full sequence is Tyrosine-protein kinase transforming protein Src (526 aa).

A disordered region spans residues 1 to 52; the sequence is MGSSKSKPKDPSQRRHSLEPPDSTHHGGFPASQTPDETAAPDAHRNPSRSFG. A lipid anchor (N-myristoyl glycine; by host) is attached at Gly-2. Over residues 7–25 the composition is skewed to basic and acidic residues; that stretch reads KPKDPSQRRHSLEPPDSTH. 2 SH3 domains span residues 71 to 139 and 81 to 142; these read TSPQ…YVAP and GGVT…PSDS. The SH2 domain occupies 148–245; it reads WYFGKITRRE…GLCHRLANVC (98 aa). The Protein kinase domain occupies 267-517; it reads LRLEAKLGQG…TFKYLQAQLL (251 aa). ATP is bound by residues 273–281 and Lys-295; that span reads LGQGCFGEV. The active-site Proton acceptor is the Asp-386. Tyr-416 bears the Phosphotyrosine; by autocatalysis mark.

This sequence belongs to the protein kinase superfamily. Tyr protein kinase family. SRC subfamily. Homodimer. The phosphorylated form is termed pp60v-src.

The catalysed reaction is L-tyrosyl-[protein] + ATP = O-phospho-L-tyrosyl-[protein] + ADP + H(+). This phosphoprotein, required for both the initiation and the maintenance of neoplastic transformation, is a protein kinase that catalyzes the phosphorylation of tyrosine residues in vitro. The polypeptide is Tyrosine-protein kinase transforming protein Src (V-SRC) (Gallus gallus (Chicken)).